A 224-amino-acid chain; its full sequence is uncharacterized protein (224 aa).

In terms of domain architecture, ABC transporter spans 2–221; it reads IEAKNVWKIY…KLRDGEIVEI (220 aa). 38–45 is a binding site for ATP; the sequence is GPSGCGKS.

It belongs to the ABC transporter superfamily.

This is an uncharacterized protein from Methanocaldococcus jannaschii (strain ATCC 43067 / DSM 2661 / JAL-1 / JCM 10045 / NBRC 100440) (Methanococcus jannaschii).